The sequence spans 206 residues: Probable N-acetyltransferase 14 (206 aa).

Residues Leu-55–Leu-206 form the N-acetyltransferase domain. The helical transmembrane segment at Phe-57–Val-77 threads the bilayer.

This sequence belongs to the camello family.

It localises to the membrane. Functionally, probable acetyltransferase. In terms of biological role, may act as a transcription factor regulating the expression of coproporphyrinogen oxidase by binding to a promoter regulatory element. The protein is Probable N-acetyltransferase 14 (NAT14) of Macaca fascicularis (Crab-eating macaque).